The following is a 575-amino-acid chain: uncharacterized protein (575 aa).

Its subcellular location is the cytoplasm. The protein resides in the cytoskeleton. It is found in the microtubule organizing center. It localises to the spindle pole body. This is an uncharacterized protein from Schizosaccharomyces pombe (strain 972 / ATCC 24843) (Fission yeast).